The sequence spans 269 residues: Protein TIFY 11B (269 aa).

In terms of domain architecture, Tify spans 100–135 (PESGNSQLTIFFGGKVMVFNEFPEDKAKEIMEVAKE). Residues 160 to 181 (PDLNEPTSSGNNEDQETGQQHQ) form a disordered region. A compositionally biased stretch (polar residues) spans 164–181 (EPTSSGNNEDQETGQQHQ). Positions 186-210 (IARRASLHRFFAKRKDRAVARAPYQ) match the Jas motif. Positions 187 to 194 (ARRASLHR) match the Nuclear localization signal motif. Positions 209 to 269 (YQVNQHGSHL…QSSKNLELKL (61 aa)) are disordered. The span at 250 to 269 (MPMEVDKKEGQSSKNLELKL) shows a compositional bias: basic and acidic residues.

This sequence belongs to the TIFY/JAZ family. In terms of assembly, homo- and heterodimer. Interacts with MYC2, AFPH2/NINJA, TIFY10A/JAZ1, TIFY10B/JAZ2, TIFY11A/JAZ5, TIFY5A/JAZ8, TIFY9/JAZ10 and TIFY3B/JAZ12. As to quaternary structure, (Microbial infection) Interacts with the pathogenic Pseudomonas syringae HopZ1a protein. Post-translationally, (Microbial infection) Acetylated by Pseudomonas syringae HopZ1a. In terms of processing, ubiquitinated. Targeted for degradation by the SCF(COI1) E3 ubiquitin ligase-proteasome pathway during jasmonate signaling.

The protein resides in the nucleus. The protein localises to the cell membrane. Its function is as follows. Repressor of jasmonate responses. In Arabidopsis thaliana (Mouse-ear cress), this protein is Protein TIFY 11B.